The following is a 421-amino-acid chain: Flap endonuclease 1 (421 aa).

An N-domain region spans residues 1-109 (MGIKGLAKLL…HELIKRREKR (109 aa)). Asp34 serves as a coordination point for Mg(2+). 2 residues coordinate DNA: Arg47 and Arg75. Residues Asp91, Glu163, Glu165, Asp184, and Asp186 each coordinate Mg(2+). Residues 127-258 (EQDKQSKRLV…KTALKLIREH (132 aa)) form an I-domain region. Position 163 (Glu163) interacts with DNA. 2 residues coordinate DNA: Gly236 and Asp238. Asp238 is a Mg(2+) binding site. Positions 284-307 (KKLDAQSDDDDEEGVESPSKEENN) are disordered. The span at 289 to 298 (QSDDDDEEGV) shows a compositional bias: acidic residues. The segment at 379–387 (PQTRMDSFF) is interaction with PCNA. The tract at residues 398-421 (SAAKRKADAAKAKAAVSKKKTKKH) is disordered.

The protein belongs to the XPG/RAD2 endonuclease family. FEN1 subfamily. In terms of assembly, interacts with PCNA. Three molecules of FEN1 bind to one PCNA trimer with each molecule binding to one PCNA monomer. PCNA stimulates the nuclease activity without altering cleavage specificity. Mg(2+) serves as cofactor. Post-translationally, phosphorylated. Phosphorylation upon DNA damage induces relocalization to the nuclear plasma.

The protein localises to the nucleus. It is found in the nucleolus. It localises to the nucleoplasm. Its subcellular location is the mitochondrion. Its function is as follows. Structure-specific nuclease with 5'-flap endonuclease and 5'-3' exonuclease activities involved in DNA replication and repair. During DNA replication, cleaves the 5'-overhanging flap structure that is generated by displacement synthesis when DNA polymerase encounters the 5'-end of a downstream Okazaki fragment. It enters the flap from the 5'-end and then tracks to cleave the flap base, leaving a nick for ligation. Also involved in the long patch base excision repair (LP-BER) pathway, by cleaving within the apurinic/apyrimidinic (AP) site-terminated flap. Acts as a genome stabilization factor that prevents flaps from equilibrating into structures that lead to duplications and deletions. Also possesses 5'-3' exonuclease activity on nicked or gapped double-stranded DNA, and exhibits RNase H activity. Also involved in replication and repair of rDNA and in repairing mitochondrial DNA. This chain is Flap endonuclease 1, found in Phaeodactylum tricornutum (strain CCAP 1055/1).